We begin with the raw amino-acid sequence, 398 residues long: Phosphoglycerate kinase (398 aa).

Residues 23-25 (DFN), Arg38, 61-64 (HMGK), Arg122, and Arg155 contribute to the substrate site. Residues Lys206, Gly297, Glu328, and 354–357 (GGDS) each bind ATP.

Belongs to the phosphoglycerate kinase family. As to quaternary structure, monomer.

It localises to the cytoplasm. It carries out the reaction (2R)-3-phosphoglycerate + ATP = (2R)-3-phospho-glyceroyl phosphate + ADP. It functions in the pathway carbohydrate degradation; glycolysis; pyruvate from D-glyceraldehyde 3-phosphate: step 2/5. The sequence is that of Phosphoglycerate kinase from Clostridium botulinum (strain 657 / Type Ba4).